A 139-amino-acid chain; its full sequence is MKKGTVLNSEISSVISRLGHTDTLVVCDAGLPIPNSTARIDIALTQGVPSFMQVVDVVTREMQVEAAILATEIKQQNPQLHETLLTHLEQLQQHQGNTIKISYTTHEQFKKLTADSQAVIRSGECSPYANVILCAGVTF.

The Proton donor role is filled by His20. Substrate is bound by residues Asp28, His106, and 128–130 (YAN).

It belongs to the RbsD / FucU family. RbsD subfamily. In terms of assembly, homodecamer.

It is found in the cytoplasm. The catalysed reaction is beta-D-ribopyranose = beta-D-ribofuranose. The protein operates within carbohydrate metabolism; D-ribose degradation; D-ribose 5-phosphate from beta-D-ribopyranose: step 1/2. Its function is as follows. Catalyzes the interconversion of beta-pyran and beta-furan forms of D-ribose. The protein is D-ribose pyranase of Salmonella agona (strain SL483).